The sequence spans 348 residues: Lysophosphatidic acid receptor 2 (348 aa).

Topologically, residues 1 to 30 (MGQCYYNETIGFFYNNSGKELSLHWRPKDV) are extracellular. N-linked (GlcNAc...) asparagine glycosylation is found at N7 and N15. Residues 31–51 (VVVALGLTVSVLVLLTNLLVI) form a helical membrane-spanning segment. The Cytoplasmic segment spans residues 52 to 66 (AAIASNRRFHQPIYY). A helical membrane pass occupies residues 67–87 (LLGNLAAADLFAGMAYLFLMF). The Extracellular portion of the chain corresponds to 88 to 104 (HTGPRTARLSIKGWFLR). A helical transmembrane segment spans residues 105–124 (QGLLDTSLTASVATLLAIAV). The Cytoplasmic segment spans residues 125–144 (ERHRSVMAVQLHSRLPRGRV). Residues 145-165 (VTLIVGVWAAALGLGLLPAHF) form a helical membrane-spanning segment. Residues 166 to 185 (WHCLCDLDSCSRMVPLFSRS) lie on the Extracellular side of the membrane. Residues 186-206 (YLAAWALSSLLVFLLMVAVYT) form a helical membrane-spanning segment. Over 207 to 239 (RIFFYVRRRVERMAEHVSCHPRYRETTLSLVKT) the chain is Cytoplasmic. A helical transmembrane segment spans residues 240–260 (VVIILGAFVVCWTPGQVVLLL). The Extracellular portion of the chain corresponds to 261 to 270 (DGLDCKSCNV). A helical transmembrane segment spans residues 271–291 (LAVEKYFLLLAEANSLVNAVV). Over 292 to 348 (YSCRDAEMRRTFRRLLCCMCLRWSSHKSARYSASAQTGASTRIMLPENGRPLMDSTL) the chain is Cytoplasmic. A lipid anchor (S-palmitoyl cysteine) is attached at C308. Positions 345-348 (DSTL) match the PDZ-binding motif.

It belongs to the G-protein coupled receptor 1 family. In terms of assembly, interacts with SLC9A3R2/NHERF2, MAGI3 and PLCB3. Interacts with RALA and GRK2. Most abundantly expressed in testes, kidney, and embryonic brain. Other organs also express the transcript, including heart, lung, spleen, thymus, stomach, and adult brain. Several have little or no expression, including liver, small intestine, and skeletal muscle.

The protein localises to the cell surface. The protein resides in the cell membrane. Receptor for lysophosphatidic acid (LPA), a mediator of diverse cellular activities. Seems to be coupled to the G(i)/G(o), G(12)/G(13), and G(q) families of heteromeric G proteins. Plays a key role in phospholipase C-beta (PLC-beta) signaling pathway Stimulates phospholipase C (PLC) activity in a manner that is independent of RALA activation. This Mus musculus (Mouse) protein is Lysophosphatidic acid receptor 2.